Consider the following 493-residue polypeptide: Cyclin-dependent kinase-like 2 (493 aa).

A Protein kinase domain is found at 4 to 287 (YENLGLVGEG…CAELLHHDFF (284 aa)). ATP is bound by residues 10-18 (VGEGSYGMV) and Lys-33. A [NKR]KIAxRE motif is present at residues 45–51 (KKIAMRE). The active-site Proton acceptor is Asp-126. Disordered regions lie at residues 311-338 (VSLS…KTLV) and 363-384 (GEKA…SRTS). Positions 320-336 (RKKEKEKDDSLGEERKT) are enriched in basic and acidic residues.

The protein belongs to the protein kinase superfamily. CMGC Ser/Thr protein kinase family. CDC2/CDKX subfamily.

The protein resides in the cytoplasm. The protein localises to the nucleus. It carries out the reaction L-seryl-[protein] + ATP = O-phospho-L-seryl-[protein] + ADP + H(+). It catalyses the reaction L-threonyl-[protein] + ATP = O-phospho-L-threonyl-[protein] + ADP + H(+). The chain is Cyclin-dependent kinase-like 2 from Pongo abelii (Sumatran orangutan).